Reading from the N-terminus, the 95-residue chain is Large ribosomal subunit protein uL23 (95 aa).

This sequence belongs to the universal ribosomal protein uL23 family. In terms of assembly, part of the 50S ribosomal subunit. Contacts protein L29, and trigger factor when it is bound to the ribosome.

One of the early assembly proteins it binds 23S rRNA. One of the proteins that surrounds the polypeptide exit tunnel on the outside of the ribosome. Forms the main docking site for trigger factor binding to the ribosome. This chain is Large ribosomal subunit protein uL23, found in Lawsonia intracellularis (strain PHE/MN1-00).